A 109-amino-acid polypeptide reads, in one-letter code: Cell division suppressor protein YneA (109 aa).

A LysM domain is found at 39 to 90 (SEVNVNEGDSLWALADQYAGKSDMAKADFVSWVEKENNLSDGHVEAGDSVVI).

The protein belongs to the YneA family.

Its subcellular location is the cytoplasm. In terms of biological role, inhibits cell division during the SOS response. Affects a later stage of the cell division protein assembly, after the assembly of the Z ring, by probably suppressing recruitment of FtsL and/or DivIC to the division machinery. This chain is Cell division suppressor protein YneA, found in Listeria monocytogenes serovar 1/2a (strain ATCC BAA-679 / EGD-e).